We begin with the raw amino-acid sequence, 39 residues long: SYSMEHFRWGKPVGKKRRPVKVYPNGAEDESAEAFPLEF.

At serine 1 the chain carries N-acetylserine. Valine 13 carries the valine amide modification. Position 31 is a phosphoserine (serine 31).

It belongs to the POMC family.

Its subcellular location is the secreted. Precursor protein for pituitary hormones that regulate stress and environmental adaptation. Functionally, stimulates the adrenal glands to release cortisol. Its function is as follows. Anorexigenic peptide. Increases the pigmentation of skin by increasing melanin production in melanocytes. The chain is Pro-opiomelanocortin (POMC) from Balaenoptera borealis (Sei whale).